The following is a 63-amino-acid chain: Cecropin-C (63 aa).

Residues 1–23 (MNFNKIFVFVALILAISLGQSEA) form the signal peptide. At Arg-62 the chain carries Arginine amide.

It belongs to the cecropin family.

The protein resides in the secreted. Its function is as follows. Cecropins have lytic and antibacterial activity against several Gram-positive and Gram-negative bacteria. This is Cecropin-C (CecC) from Drosophila orena (Fruit fly).